A 334-amino-acid polypeptide reads, in one-letter code: Protein-methionine-sulfoxide reductase catalytic subunit MsrP (334 aa).

Positions methionine 1 to alanine 44 form a signal peptide, tat-type signal. Residues asparagine 88, tyrosine 91–glutamate 92, cysteine 146, threonine 181, asparagine 233, arginine 238, and glycine 249–lysine 251 each bind Mo-molybdopterin.

Belongs to the MsrP family. Heterodimer of a catalytic subunit (MsrP) and a heme-binding subunit (MsrQ). Mo-molybdopterin is required as a cofactor. Predicted to be exported by the Tat system. The position of the signal peptide cleavage has not been experimentally proven.

It localises to the periplasm. The catalysed reaction is L-methionyl-[protein] + a quinone + H2O = L-methionyl-(S)-S-oxide-[protein] + a quinol. It catalyses the reaction L-methionyl-[protein] + a quinone + H2O = L-methionyl-(R)-S-oxide-[protein] + a quinol. Its function is as follows. Part of the MsrPQ system that repairs oxidized periplasmic proteins containing methionine sulfoxide residues (Met-O), using respiratory chain electrons. Thus protects these proteins from oxidative-stress damage caused by reactive species of oxygen and chlorine generated by the host defense mechanisms. MsrPQ is essential for the maintenance of envelope integrity under bleach stress, rescuing a wide series of structurally unrelated periplasmic proteins from methionine oxidation, including the primary periplasmic chaperone SurA and the lipoprotein Pal. The catalytic subunit MsrP is non-stereospecific, being able to reduce both (R-) and (S-) diastereoisomers of methionine sulfoxide. The polypeptide is Protein-methionine-sulfoxide reductase catalytic subunit MsrP (Escherichia coli (strain UTI89 / UPEC)).